A 105-amino-acid polypeptide reads, in one-letter code: UPF0235 protein A1C_06510 (105 aa).

The protein belongs to the UPF0235 family.

The chain is UPF0235 protein A1C_06510 from Rickettsia akari (strain Hartford).